The primary structure comprises 311 residues: 4-diphosphocytidyl-2-C-methyl-D-erythritol kinase (311 aa).

Residue Lys11 is part of the active site. 94-104 provides a ligand contact to ATP; sequence PVAAGLAGGSA. Residue Asp136 is part of the active site.

This sequence belongs to the GHMP kinase family. IspE subfamily.

The catalysed reaction is 4-CDP-2-C-methyl-D-erythritol + ATP = 4-CDP-2-C-methyl-D-erythritol 2-phosphate + ADP + H(+). It participates in isoprenoid biosynthesis; isopentenyl diphosphate biosynthesis via DXP pathway; isopentenyl diphosphate from 1-deoxy-D-xylulose 5-phosphate: step 3/6. Its function is as follows. Catalyzes the phosphorylation of the position 2 hydroxy group of 4-diphosphocytidyl-2C-methyl-D-erythritol. The protein is 4-diphosphocytidyl-2-C-methyl-D-erythritol kinase of Synechococcus sp. (strain JA-2-3B'a(2-13)) (Cyanobacteria bacterium Yellowstone B-Prime).